We begin with the raw amino-acid sequence, 287 residues long: Probable glucose uptake protein GlcU (287 aa).

A run of 9 helical transmembrane segments spans residues 7 to 29, 34 to 56, 58 to 75, 114 to 136, 156 to 178, 183 to 202, 209 to 228, 233 to 255, and 267 to 286; these read LIALLPALFWGSVVLINVFVGGG, IRGTTLGALIVGLGLLITGFAKF, NPTVIIVGLISGALWAFG, WSSMTQIIFGLIAMILLVTGVAL, MGILIVSTVGYVGFVVLGDIFGV, ALFFQSVGMAIGGFILSMNH, TALNLLPGVIWGIGNLFMFY, VGVATSFSLSQLLVIVSTLGGIF, and TGIWVGIIIIVIAAIILGNL.

It belongs to the GRP transporter (TC 2.A.7.5) family.

The protein localises to the cell membrane. Its function is as follows. Involved in the uptake of glucose. The sequence is that of Probable glucose uptake protein GlcU (glcU) from Staphylococcus aureus (strain MRSA252).